The chain runs to 447 residues: Tol-Pal system protein TolB (447 aa).

Residues Met1–Ala34 form the signal peptide. The tract at residues Arg426–Ser447 is disordered.

It belongs to the TolB family. In terms of assembly, the Tol-Pal system is composed of five core proteins: the inner membrane proteins TolA, TolQ and TolR, the periplasmic protein TolB and the outer membrane protein Pal. They form a network linking the inner and outer membranes and the peptidoglycan layer.

It is found in the periplasm. Its function is as follows. Part of the Tol-Pal system, which plays a role in outer membrane invagination during cell division and is important for maintaining outer membrane integrity. The chain is Tol-Pal system protein TolB from Rhodopseudomonas palustris (strain BisB18).